A 412-amino-acid polypeptide reads, in one-letter code: Putative disintegrin and metalloproteinase domain-containing protein 5 (412 aa).

Positions 111 to 199 constitute a Disintegrin domain; sequence EKYADTNILL…YCLPDTYVRD (89 aa). Residues 351–385 form the EGF-like domain; that stretch reads NLKLCDASNHCDRHGVCNNFNHCHCEKGYNPPYCQ.

Interacts with TEX101. In terms of tissue distribution, highly expressed in testis.

Its function is as follows. This is a non catalytic metalloprotease-like protein. This Homo sapiens (Human) protein is Putative disintegrin and metalloproteinase domain-containing protein 5 (ADAM5).